The following is an 80-amino-acid chain: Centromere protein X (80 aa).

It belongs to the CENP-X/MHF2 family. As to quaternary structure, heterodimer with CENPX, sometimes called MHF; this interaction stabilizes both partners. MHF heterodimers can assemble to form tetrameric structures. MHF also coassemble with CENPT-CENPW heterodimers at centromeres to form the tetrameric CENP-T-W-S-X complex. Forms a discrete complex with FANCM and CENPX, called FANCM-MHF; this interaction, probably mediated by direct binding between CENPS and FANCM, leads to synergistic activation of double-stranded DNA binding and strongly stimulates FANCM-mediated DNA remodeling. Recruited by FANCM to the Fanconi anemia (FA) core complex, which consists of CENPS, CENPX, FANCA, FANCB, FANCC, FANCE, FANCF, FANCG, FANCL, FANCM, FAAP24 and FAAP100. The FA core complex associates with Bloom syndrome (BLM) complex, which consists of at least BLM, DNA topoisomerase 3-alpha (TOP3A), RMI1/BLAP75, RPA1/RPA70 and RPA2/RPA32. The super complex between FA and BLM is called BRAFT.

It localises to the nucleus. The protein resides in the chromosome. Its subcellular location is the centromere. The protein localises to the kinetochore. DNA-binding component of the Fanconi anemia (FA) core complex. Required for the normal activation of the FA pathway, leading to monoubiquitination of the FANCI-FANCD2 complex in response to DNA damage, cellular resistance to DNA cross-linking drugs, and prevention of chromosomal breakage. In complex with CENPS (MHF heterodimer), crucial cofactor for FANCM in both binding and ATP-dependent remodeling of DNA. Stabilizes FANCM. In complex with CENPS and FANCM (but not other FANC proteins), rapidly recruited to blocked forks and promotes gene conversion at blocked replication forks. In complex with CENPS, CENPT and CENPW (CENP-T-W-S-X heterotetramer), involved in the formation of a functional kinetochore outer plate, which is essential for kinetochore-microtubule attachment and faithful mitotic progression. As a component of MHF and CENP-T-W-S-X complexes, binds DNA and bends it to form a nucleosome-like structure. DNA-binding function is fulfilled in the presence of CENPS, with the following preference for DNA substates: Holliday junction &gt; double-stranded &gt; splay arm &gt; single-stranded. Does not bind DNA on its own. The sequence is that of Centromere protein X (CENPX) from Gallus gallus (Chicken).